The primary structure comprises 256 residues: Fructose-1,6-bisphosphatase/inositol-1-monophosphatase (256 aa).

Positions 65, 79, 81, and 82 each coordinate Mg(2+). Substrate-binding positions include 82-84, Arg-172, Ala-177, and Arg-196; that span reads DGT. Asp-201 lines the Mg(2+) pocket.

The protein belongs to the inositol monophosphatase superfamily. FBPase class 4 family. Homotetramer. The cofactor is Mg(2+).

The catalysed reaction is beta-D-fructose 1,6-bisphosphate + H2O = beta-D-fructose 6-phosphate + phosphate. The enzyme catalyses a myo-inositol phosphate + H2O = myo-inositol + phosphate. Its activity is regulated as follows. In contrast to mammalian I-1-P phosphatases, is only weakly inhibited by Li(+), since 50% inhibitory concentration for Li(+) is about 100 mM, and the Li(+) concentration required to totally abolish I-1-Pase activity is 1 M. Its function is as follows. Phosphatase with broad specificity; it can dephosphorylate fructose 1,6-bisphosphate, both D and L isomers of inositol-1-phosphate (I-1-P) but displaying a 20-fold higher rate of hydrolysis of D-I-1-P than of the L isomer, 2'-AMP, pNPP, inositol-2-phosphate, beta-glycerol phosphate, and alpha-D-glucose-1-phosphate. Cannot hydrolyze glucose-6-phosphate, fructose-6-phosphate, 5'-AMP and NAD(+). May be involved in the biosynthesis of a unique osmolyte, di-myo-inositol 1,1-phosphate. The protein is Fructose-1,6-bisphosphatase/inositol-1-monophosphatase (suhB) of Thermotoga maritima (strain ATCC 43589 / DSM 3109 / JCM 10099 / NBRC 100826 / MSB8).